A 103-amino-acid chain; its full sequence is Thioredoxin-1 (103 aa).

The 102-residue stretch at V2–A103 folds into the Thioredoxin domain. Catalysis depends on nucleophile residues C30 and C33. Cysteines 30 and 33 form a disulfide. Glycyl lysine isopeptide (Lys-Gly) (interchain with G-Cter in ubiquitin) cross-links involve residues K54, K66, and K96.

It belongs to the thioredoxin family. In terms of assembly, monomer. Part of the heterodimeric LMA1 complex together with the proteinase inhibitor PBI2. Most of the thioredoxin of yeast is in this complex rather than the well-studied monomer. LMA1 binds to the ATPase SEC18. Reversible disulfide bond formation between Cys-30 and Cys-33, reverted by thioredoxin reductase TRR1 using NADPH as hydrogen donor.

Its subcellular location is the nucleus. The protein resides in the cytoplasm. It is found in the golgi apparatus membrane. It localises to the mitochondrion intermembrane space. Functionally, participates as a hydrogen donor in redox reactions through the reversible oxidation of its active center dithiol to a disulfide, accompanied by the transfer of 2 electrons and 2 protons. It is involved in many cellular processes, including deoxyribonucleotide synthesis, repair of oxidatively damaged proteins, protein folding, sulfur metabolism, and redox homeostasis. Thioredoxin-dependent enzymes include phosphoadenosine-phosphosulfate reductase MET16, alkyl-hydroperoxide reductase DOT5, thioredoxin peroxidases TSA1 and TSA2, alkyl hydroperoxide reductase AHP1, and peroxiredoxin HYR1. Thioredoxin is also involved in protection against reducing stress. As part of the LMA1 complex, it is involved in the facilitation of vesicle fusion such as homotypic vacuole and ER-derived COPII vesicle fusion with the Golgi. This activity does not require the redox mechanism. The polypeptide is Thioredoxin-1 (TRX1) (Saccharomyces cerevisiae (strain ATCC 204508 / S288c) (Baker's yeast)).